The sequence spans 120 residues: Secreted RxLR effector protein 29 (120 aa).

Residues 1–21 (MRRTAFIVLSLVALIAPCVTS) form the signal peptide. The short motif at 47-64 (RHLRSEANGRLAVVDEEK) is the RxLR-dEER element.

It belongs to the RxLR effector family.

The protein resides in the secreted. Its subcellular location is the host cytoplasm. It localises to the host nucleus. Functionally, effector that acts as a broad suppressor of cell death to interrupt plant immunity. Inhibits cell death induced by cell death-inducing proteins, including the PAMP elicitor INF1 from P.infestans. The protein is Secreted RxLR effector protein 29 of Plasmopara viticola (Downy mildew of grapevine).